Here is a 428-residue protein sequence, read N- to C-terminus: Adenylosuccinate synthetase (428 aa).

GTP-binding positions include 12 to 18 and 40 to 42; these read GDEGKGK and GHT. The Proton acceptor role is filled by D13. Mg(2+)-binding residues include D13 and G40. Residues 13–16, 38–41, T130, R144, Q224, T239, and R303 each bind IMP; these read DEGK and NAGH. Residue H41 is the Proton donor of the active site. 299–305 provides a ligand contact to substrate; the sequence is VTTGRSR. GTP-binding positions include R305, 331-333, and 413-415; these read KID and GVG.

Belongs to the adenylosuccinate synthetase family. Homodimer. Mg(2+) serves as cofactor.

The protein localises to the cytoplasm. The enzyme catalyses IMP + L-aspartate + GTP = N(6)-(1,2-dicarboxyethyl)-AMP + GDP + phosphate + 2 H(+). It functions in the pathway purine metabolism; AMP biosynthesis via de novo pathway; AMP from IMP: step 1/2. In terms of biological role, plays an important role in the de novo pathway of purine nucleotide biosynthesis. Catalyzes the first committed step in the biosynthesis of AMP from IMP. This is Adenylosuccinate synthetase from Clostridium perfringens (strain 13 / Type A).